A 327-amino-acid polypeptide reads, in one-letter code: Putative pumilio homolog 19 (327 aa).

In terms of domain architecture, PUM-HD spans 1–324 (MAVSDNTFSM…NIANILDTFR (324 aa)). Pumilio repeat units lie at residues 79–114 (SDSDYFMSIVTTKFGSRRVQKLLGKSDDVDAFFCAA), 115–149 (ILRRFLHITTDKYASYVTIRAMVVFDKVMKKALYE), 150–185 (RILYHALDLACDQHGCIALNDIITDADDPYYRDQLL), 186–222 (ELVVSNALRLSNDASGNFVVQHVLTLYDSRCIHNIAV), 223–260 (NLYGQCIELSFKKYGSYIVEKLLEVEESMVVVVVELLG), and 261–295 (CDGDRLMRLARNEFGNFVVVKALRFTKEMRMDLFW).

The protein resides in the cytoplasm. Its function is as follows. Sequence-specific RNA-binding protein that regulates translation and mRNA stability by binding the 3'-UTR of target mRNAs. The sequence is that of Putative pumilio homolog 19 (APUM19) from Arabidopsis thaliana (Mouse-ear cress).